The following is a 423-amino-acid chain: Phthiocerol/phthiodiolone dimycocerosyl transferase (423 aa).

Residue H125 is the Proton acceptor of the active site.

Belongs to the acyltransferase PapA5 family. In terms of assembly, monomer. Interacts directly with the acyl carrier protein (ACP) domain of the mycocerosic acid synthase (mas) protein.

The enzyme catalyses 2 a mycocerosyl-[mycocerosic acid synthase] + a phthiocerol = a dimycocerosyl phthiocerol + 2 holo-[mycocerosic acid synthase].. The catalysed reaction is 2 a mycocerosyl-[mycocerosic acid synthase] + a phthiodiolone = a dimycocerosyl phthiodiolone + 2 holo-[mycocerosic acid synthase].. It carries out the reaction 2 a mycocerosyl-[mycocerosic acid synthase] + a phenolphthiocerol = a dimycocerosyl phenolphthiocerol + 2 holo-[mycocerosic acid synthase].. In terms of biological role, catalyzes diesterification of phthiocerol, phthiodiolone, and phenolphthiocerol with mycocerosic acids, the final step in the phthiocerol, phthiodiolone and phenolphthiocerol dimycocerosate esters (PDIM) synthesis. Can directly transfer the mycocerosate bound to the mycocerosic acid synthase (mas) onto the substrate alcohols. The chain is Phthiocerol/phthiodiolone dimycocerosyl transferase (papA5) from Mycobacterium leprae (strain TN).